We begin with the raw amino-acid sequence, 179 residues long: GTP-dependent dephospho-CoA kinase (179 aa).

GTP-binding residues include D55, V57, D74, K76, and E128.

Belongs to the GTP-dependent DPCK family.

The catalysed reaction is 3'-dephospho-CoA + GTP = GDP + CoA + H(+). It participates in cofactor biosynthesis; coenzyme A biosynthesis. Its function is as follows. Catalyzes the GTP-dependent phosphorylation of the 3'-hydroxyl group of dephosphocoenzyme A to form coenzyme A (CoA). The chain is GTP-dependent dephospho-CoA kinase from Saccharolobus islandicus (strain M.16.4 / Kamchatka #3) (Sulfolobus islandicus).